An 897-amino-acid chain; its full sequence is Staphylococcal nuclease domain-containing protein 1 (897 aa).

TNase-like domains are found at residues 18–167 (QLQR…LWSE), 194–329 (KPVN…IWKD), 342–499 (RQFV…LHSK), and 528–663 (GRSE…LWAN). Residues 732–790 (APRRGEFCIAKFADGEWYRARVEKVESPAKVHVFYIDYGNREVLSSTRLAALPPAFSTR) enclose the Tudor domain.

It localises to the cytoplasm. The sequence is that of Staphylococcal nuclease domain-containing protein 1 (snd1) from Danio rerio (Zebrafish).